A 218-amino-acid polypeptide reads, in one-letter code: Ubiquitin-conjugating enzyme E2-24 kDa (218 aa).

A UBC core domain is found at 3 to 148 (SSKRRIETDV…IKEYIDKYAT (146 aa)). The active-site Glycyl thioester intermediate is the Cys85. The disordered stretch occupies residues 154–218 (QMFGGDNDSD…DDDYDEVANQ (65 aa)). 2 stretches are compositionally biased toward acidic residues: residues 160–183 (NDSD…EDMD) and 192–218 (DSVD…VANQ).

The protein belongs to the ubiquitin-conjugating enzyme family.

The protein resides in the cytoplasm. It carries out the reaction S-ubiquitinyl-[E1 ubiquitin-activating enzyme]-L-cysteine + [E2 ubiquitin-conjugating enzyme]-L-cysteine = [E1 ubiquitin-activating enzyme]-L-cysteine + S-ubiquitinyl-[E2 ubiquitin-conjugating enzyme]-L-cysteine.. The protein operates within protein modification; protein ubiquitination. In terms of biological role, catalyzes the covalent attachment of ubiquitin to other proteins. Required for the adaptation to the presence of glucose in the growth medium; mediates the degradation of enzymes involved in gluconeogenesis when cells are shifted to glucose-containing medium. Required for proteasome-dependent catabolite degradation of fructose-1,6-bisphosphatase (FBP1). The polypeptide is Ubiquitin-conjugating enzyme E2-24 kDa (UBC8) (Saccharomyces cerevisiae (strain ATCC 204508 / S288c) (Baker's yeast)).